The primary structure comprises 144 residues: Glutaredoxin-C6 (144 aa).

Residues 39 to 143 enclose the Glutaredoxin domain; it reads EAKIRRLISE…PKLVQVGALW (105 aa). An intrachain disulfide couples C59 to C62.

This sequence belongs to the glutaredoxin family. CC-type subfamily.

The protein resides in the cytoplasm. In terms of biological role, has a glutathione-disulfide oxidoreductase activity in the presence of NADPH and glutathione reductase. Reduces low molecular weight disulfides and proteins. In Arabidopsis thaliana (Mouse-ear cress), this protein is Glutaredoxin-C6 (GRXC6).